The chain runs to 244 residues: Glucosamine-6-phosphate deaminase (244 aa).

Residue Asp67 is the Proton acceptor; for enolization step of the active site. The active-site For ring-opening step is the Asn136. The active-site Proton acceptor; for ring-opening step is the His138. Residue Glu143 is the For ring-opening step of the active site.

It belongs to the glucosamine/galactosamine-6-phosphate isomerase family. NagB subfamily.

It carries out the reaction alpha-D-glucosamine 6-phosphate + H2O = beta-D-fructose 6-phosphate + NH4(+). The protein operates within amino-sugar metabolism; N-acetylneuraminate degradation; D-fructose 6-phosphate from N-acetylneuraminate: step 5/5. Its function is as follows. Catalyzes the reversible isomerization-deamination of glucosamine 6-phosphate (GlcN6P) to form fructose 6-phosphate (Fru6P) and ammonium ion. The chain is Glucosamine-6-phosphate deaminase from Clostridium botulinum (strain Okra / Type B1).